The primary structure comprises 1332 residues: SAGA complex subunit SPT7 (1332 aa).

At threonine 78 the chain carries Phosphothreonine; by ATM or ATR. Disordered regions lie at residues 80–118 (EEEHHGAVSPAVDTRSDDVSSQTIKDNNNTNTNTSISNE), 209–268 (VEEK…ISSS), and 331–384 (IEKG…PKQS). The residue at position 88 (serine 88) is a Phosphoserine. The span at 106-118 (NNNTNTNTSISNE) shows a compositional bias: low complexity. Residues 217-233 (IGKNEKPQNKEGISKFA) show a composition bias toward basic and acidic residues. Acidic residues predominate over residues 234 to 249 (EDEDYDDEDENYDEDS). Residues 250–260 (TDVKNVDDPPK) are compositionally biased toward basic and acidic residues. The segment covering 345 to 360 (AATDEQDRENTNDEPD) has biased composition (acidic residues). Positions 362-376 (NQKLPTPEGSTFSDT) are enriched in polar residues. The 107-residue stretch at 440 to 546 (IGQEELYEAC…KKSLQLIRMI (107 aa)) folds into the Bromo domain. The span at 566-578 (KDKDYELDEEEEV) shows a compositional bias: acidic residues. Disordered stretches follow at residues 566-724 (KDKD…YLLE) and 1286-1332 (GAEN…RLNQ). Basic and acidic residues-rich tracts occupy residues 593 to 634 (LAKE…KDKT) and 644 to 697 (NVNK…KEAG). The span at 698–716 (ENNEEEEDDDDEDEDEDMV) shows a compositional bias: acidic residues. The residue at position 1293 (serine 1293) is a Phosphoserine. Positions 1316–1332 (NMGSNSSFSLSLPRLNQ) are enriched in polar residues.

In terms of assembly, component of the 1.8 MDa SAGA (Spt-Ada-Gcn5 acetyltransferase) complex, which is composed of 19 subunits TRA1, SPT7, TAF5, NGG1/ADA3, SGF73, SPT20/ADA5, SPT8, TAF12, TAF6, HFI1/ADA1, UBP8, GCN5, ADA2, SPT3, SGF29, TAF10, TAF9, SGF11 and SUS1. The SAGA complex is composed of 4 modules, namely the HAT (histone acetyltransferase) module (GCN5, ADA2, NGG1/ADA3 and SGF29), the DUB (deubiquitinating) module (UBP8, SGF11, SGF73 and SUS1), the core or TAF (TBP-associated factor) module (TAF5, TAF6, TAF9, TAF10 and TAF12), and the Tra1 or SPT (Suppressor of Ty) module (TRA1, HFI1/ADA1, SPT3, SPT7, SPT8 and SPT20/ADA5). The Tra1/SPT module binds activators, the core module recruits TBP (TATA-binding protein), the HAT module contains the histone H3 acetyltransferase GCN5, and the DUB module comprises the histone H2B deubiquitinase UBP8. Also identified in an altered form of SAGA, named SALSA (SAGA altered, Spt8 absent) or SLIK (SAGA-like) complex, which contains a C-terminal truncated form of SPT7 and is missing SPT8. However, it has been shown that the SAGA and SAGA-like SALSA/SLIK transcriptional coactivators are structurally and biochemically equivalent. Identified in the Ada.spt complex with NGG1/ADA3 and TRA1. Protease PEP4 directly cleaves the C-terminus of SPT7(SAGA) to form SPT7(SLIK) within the SAGA complex in the nucleus.

The protein localises to the nucleus. Its function is as follows. Component of the transcription coactivator SAGA complex. SAGA acts as a general cofactor required for essentially all RNA polymerase II transcription. At the promoters, SAGA is required for transcription pre-initiation complex (PIC) recruitment. It influences RNA polymerase II transcriptional activity through different activities such as TBP interaction (via core/TAF module) and promoter selectivity, interaction with transcription activators (via Tra1/SPT module), and chromatin modification through histone acetylation (via HAT module) and deubiquitination (via DUB module). SAGA preferentially acetylates histones H3 (to form H3K9ac, H3K14ac, H3K18ac and H3K23ac) and H2B and deubiquitinates histone H2B. SAGA interacts with DNA via upstream activating sequences (UASs). Also identified in a modified version of SAGA named SALSA or SLIK. The cleavage of SPT7 and the absence of the SPT8 subunit in SLIK neither drive any major conformational differences in its structure compared with SAGA, nor significantly affect HAT, DUB, or DNA-binding activities. This is SAGA complex subunit SPT7 (SPT7) from Saccharomyces cerevisiae (strain ATCC 204508 / S288c) (Baker's yeast).